A 289-amino-acid polypeptide reads, in one-letter code: Phosphatidylserine decarboxylase proenzyme (289 aa).

Residues aspartate 92, histidine 149, and serine 254 each act as charge relay system; for autoendoproteolytic cleavage activity in the active site. Serine 254 serves as the catalytic Schiff-base intermediate with substrate; via pyruvic acid; for decarboxylase activity. Serine 254 carries the pyruvic acid (Ser); by autocatalysis modification.

It belongs to the phosphatidylserine decarboxylase family. PSD-B subfamily. Prokaryotic type I sub-subfamily. Heterodimer of a large membrane-associated beta subunit and a small pyruvoyl-containing alpha subunit. Pyruvate is required as a cofactor. In terms of processing, is synthesized initially as an inactive proenzyme. Formation of the active enzyme involves a self-maturation process in which the active site pyruvoyl group is generated from an internal serine residue via an autocatalytic post-translational modification. Two non-identical subunits are generated from the proenzyme in this reaction, and the pyruvate is formed at the N-terminus of the alpha chain, which is derived from the carboxyl end of the proenzyme. The autoendoproteolytic cleavage occurs by a canonical serine protease mechanism, in which the side chain hydroxyl group of the serine supplies its oxygen atom to form the C-terminus of the beta chain, while the remainder of the serine residue undergoes an oxidative deamination to produce ammonia and the pyruvoyl prosthetic group on the alpha chain. During this reaction, the Ser that is part of the protease active site of the proenzyme becomes the pyruvoyl prosthetic group, which constitutes an essential element of the active site of the mature decarboxylase.

The protein localises to the cell membrane. It carries out the reaction a 1,2-diacyl-sn-glycero-3-phospho-L-serine + H(+) = a 1,2-diacyl-sn-glycero-3-phosphoethanolamine + CO2. It participates in phospholipid metabolism; phosphatidylethanolamine biosynthesis; phosphatidylethanolamine from CDP-diacylglycerol: step 2/2. In terms of biological role, catalyzes the formation of phosphatidylethanolamine (PtdEtn) from phosphatidylserine (PtdSer). This Pseudomonas aeruginosa (strain ATCC 15692 / DSM 22644 / CIP 104116 / JCM 14847 / LMG 12228 / 1C / PRS 101 / PAO1) protein is Phosphatidylserine decarboxylase proenzyme.